The sequence spans 54 residues: ATP synthase F(0) complex subunit 8 (54 aa).

Residues Trp-9–Leu-25 traverse the membrane as a helical segment.

This sequence belongs to the ATPase protein 8 family. In terms of assembly, component of the ATP synthase complex composed at least of ATP5F1A/subunit alpha, ATP5F1B/subunit beta, ATP5MC1/subunit c (homooctomer), MT-ATP6/subunit a, MT-ATP8/subunit 8, ATP5ME/subunit e, ATP5MF/subunit f, ATP5MG/subunit g, ATP5MK/subunit k, ATP5MJ/subunit j, ATP5F1C/subunit gamma, ATP5F1D/subunit delta, ATP5F1E/subunit epsilon, ATP5PF/subunit F6, ATP5PB/subunit b, ATP5PD/subunit d, ATP5PO/subunit OSCP. ATP synthase complex consists of a soluble F(1) head domain (subunits alpha(3) and beta(3)) - the catalytic core - and a membrane F(0) domain - the membrane proton channel (subunits c, a, 8, e, f, g, k and j). These two domains are linked by a central stalk (subunits gamma, delta, and epsilon) rotating inside the F1 region and a stationary peripheral stalk (subunits F6, b, d, and OSCP).

The protein resides in the mitochondrion membrane. Subunit 8, of the mitochondrial membrane ATP synthase complex (F(1)F(0) ATP synthase or Complex V) that produces ATP from ADP in the presence of a proton gradient across the membrane which is generated by electron transport complexes of the respiratory chain. ATP synthase complex consist of a soluble F(1) head domain - the catalytic core - and a membrane F(1) domain - the membrane proton channel. These two domains are linked by a central stalk rotating inside the F(1) region and a stationary peripheral stalk. During catalysis, ATP synthesis in the catalytic domain of F(1) is coupled via a rotary mechanism of the central stalk subunits to proton translocation. In vivo, can only synthesize ATP although its ATP hydrolase activity can be activated artificially in vitro. Part of the complex F(0) domain. This chain is ATP synthase F(0) complex subunit 8, found in Branchiostoma lanceolatum (Common lancelet).